Here is a 710-residue protein sequence, read N- to C-terminus: Iron-sulfur clusters transporter ATM1, mitochondrial (710 aa).

The transit peptide at 1–38 (MWLSLPRSGYGSVATLTSKRVLACLTPLRQFSTSPAVS) directs the protein to the mitochondrion. Over residues 35-52 (PAVSNANHKNVDNINKSP) the composition is skewed to polar residues. The tract at residues 35–83 (PAVSNANHKNVDNINKSPANDAANNAVEKGDKPTTSPEKLATKAEKSSA) is disordered. Residues 39-129 (NANHKNVDNI…PKGKTSVKFR (91 aa)) lie on the Mitochondrial matrix side of the membrane. A helical transmembrane segment spans residues 130-151 (VLVAVALLVGAKLLNVQVPFFF). Residues 130-419 (VLVAVALLVG…LGSVYRDLRQ (290 aa)) enclose the ABC transmembrane type-1 domain. Residues 152–173 (KEIIDDMNIEWNSATALGVGIT) are Mitochondrial intermembrane-facing. A helical transmembrane segment spans residues 174 to 197 (ALIFSYGAARFGAVLFGELRNAIF). At 198-246 (ASVAQKAIKEVATNVFRHLLKLDMAFHLSRQTGGITRAIDRGTKGISFV) the chain is on the mitochondrial matrix side. The helical transmembrane segment at 247-270 (LSSMVFHIIPIALEISLVCGILSY) threads the bilayer. Asn-271 is a topological domain (mitochondrial intermembrane). The helical transmembrane segment at 272 to 292 (FGWKYALVTGATMVSYAIFTI) threads the bilayer. Residues 293–358 (TTTSWRTKFR…ASIKIATSLA (66 aa)) are Mitochondrial matrix-facing. Residues 298 to 302 (RTKFR) and 361 to 364 (NSGQ) each bind glutathione. Residues 359–377 (FLNSGQNLIFSSALTAMMY) form a helical membrane-spanning segment. Residues 378 to 392 (MTCCGVADGSLTVGD) are Mitochondrial intermembrane-facing. A helical membrane pass occupies residues 393 to 414 (LVLVNQLVFQLSVPLNFLGSVY). Residue Gly-411 coordinates glutathione. The Mitochondrial matrix segment spans residues 415–710 (RDLRQSLLDM…AEEKAAKKDV (296 aa)). The 235-residue stretch at 453-687 (IRFENVTYGY…DGLYKSMWDA (235 aa)) folds into the ABC transporter domain. ATP contacts are provided by residues Tyr-462 and 486 to 497 (GPSGSGKSTILK).

Belongs to the ABC transporter superfamily. ABCB family. Heavy Metal importer (TC 3.A.1.210) subfamily. In terms of assembly, homodimer.

The protein localises to the mitochondrion inner membrane. Functionally, performs an essential function in the generation of cytoplasmic iron-sulfur proteins by mediating the ATP-dependent export of Fe/S cluster precursors synthesized by NFS1 and other mitochondrial proteins. Hydrolyzes ATP. Binds glutathione and may function by transporting a glutathione-conjugated iron-sulfur compound. This is Iron-sulfur clusters transporter ATM1, mitochondrial from Yarrowia lipolytica (strain CLIB 122 / E 150) (Yeast).